The chain runs to 215 residues: S-crystallin 2 (215 aa).

Residues 2–80 enclose the GST N-terminal domain; that stretch reads PSYTLNYFNH…YLAREFGFHG (79 aa). The GST C-terminal domain occupies 82-215; the sequence is NNMEMARVEY…YLKKRSSTEF (134 aa).

Belongs to the GST superfamily. Lens.

Functionally, S-crystallins are structural components of squids and octopi eye lens. Contains relatively little if any GST activity. The polypeptide is S-crystallin 2 (Enteroctopus dofleini (North Pacific giant octopus)).